A 262-amino-acid chain; its full sequence is Tryptophan synthase alpha chain (262 aa).

Residues E48 and D59 each act as proton acceptor in the active site.

The protein belongs to the TrpA family. In terms of assembly, tetramer of two alpha and two beta chains.

The enzyme catalyses (1S,2R)-1-C-(indol-3-yl)glycerol 3-phosphate + L-serine = D-glyceraldehyde 3-phosphate + L-tryptophan + H2O. Its pathway is amino-acid biosynthesis; L-tryptophan biosynthesis; L-tryptophan from chorismate: step 5/5. The alpha subunit is responsible for the aldol cleavage of indoleglycerol phosphate to indole and glyceraldehyde 3-phosphate. In Helicobacter pylori (strain HPAG1), this protein is Tryptophan synthase alpha chain.